The chain runs to 1082 residues: RE1-silencing transcription factor (1082 aa).

The interval 32-117 (DLHELSKAEL…SLELSAVEPQ (86 aa)) is interaction with SIN3A. Residues 43–57 (APQLIMLANVALTGE) are interaction with SIN3B. Positions 140-413 (PVAEDKCRSS…KSKHPTCPSK (274 aa)) are interaction with ZFP90. The C2H2-type 1 zinc finger occupies 154 to 176 (FRCKPCQYEAESEEQFVHHIRIH). Residues 196–207 (SGSSPAEEGEFS) form a required for binding to the neuron-restrictive silencer element region. 7 consecutive C2H2-type zinc fingers follow at residues 211 to 235 (IRCD…HHLR), 243 to 265 (YKCI…LRNH), 271 to 293 (YTCS…VRTH), 299 to 321 (YKCE…MRTH), 327 to 350 (FKCD…RQVH), 356 to 378 (LNCP…VELH), and 384 to 407 (FNCP…KSKH). 2 disordered regions span residues 408 to 809 (PTCP…ELSL) and 831 to 1027 (SKLL…KAGL). Positions 440–475 (EKMENEQTKTKGDVSGKKNEKPVKAVGKDASKEKKP) are enriched in basic and acidic residues. The span at 477 to 497 (SSVSVVQVTTRTRKSAVAAET) shows a compositional bias: low complexity. Residues 581–597 (KGTKKTPPKTKTSKKGG) are compositionally biased toward basic residues. Over residues 630-640 (VTGSGSSQTEL) the composition is skewed to polar residues. 2 stretches are compositionally biased toward pro residues: residues 684 to 713 (YPQP…PAPP) and 729 to 751 (KEPP…PPPM). Composition is skewed to basic and acidic residues over residues 798–807 (LRKDRAEKEL) and 854–864 (NSREETPKDQE). Residues 900–909 (RVSSSEQNSA) are compositionally biased toward polar residues. S950 carries the phosphoserine modification. Residues 985 to 1063 (EGIHSHDGSD…HLNRHLVNVY (79 aa)) form an interaction with RCOR1 region. The C2H2-type 9 zinc finger occupies 1036–1058 (FVCIFCDRSFRKEKDYSKHLNRH).

As to quaternary structure, isoform 1 and isoform 2 form heterodimers. Isoform 2: Forms homodimers and homooligomers; binds to the neuron-restrictive silencer element (NRSE) as monomer. Interacts with SIN3A, SIN3B and RCOR1. Interacts with CDYL. Interacts with EHMT1 and EHMT2 only in the presence of CDYL. Part of a complex containing at least CDYL, REST, WIZ, SETB1, EHMT1 and EHMT2. Interacts (via zinc-finger DNA-binding domain) with ZFP90 (via N- and C-termini); the interaction inhibits REST repressor activity. Interacts (via C2H2-type zinc finger 5) with PRICKLE1. Interacts with FBXW11 and BTRC. Interacts with USP7. In terms of processing, O-glycosylated. Phosphorylated; phosphorylation is required for ubiquitination. Post-translationally, ubiquitinated; ubiquitination is mediated by BTRC and leads to proteasomal degradation in G2 phase. Ubiquitination increases during neuronal differentiation. Deubiquitinated by USP7; leading to its stabilization and promoting the maintenance of neural progenitor cells. In terms of tissue distribution, expressed in the hippocampus, including quiescent neuronal progenitor (QNP) cells, transient-amplifying progenitor (TAP) cells, neuroblasts and mature neurons (at protein level). Expressed in embryonic stem cells (at protein level). Expressed in many non-neuronal tissues including the heart and liver. Abundantly expressed in osteoblastic lineage cells. Expressed in the spleen, kidney, blood cells, cortex, neocortex and in the utricle, saccule and organ of Corti of the inner ear. Isoform 2: Expressed in the cortex, neocortex and in the utricle, saccule and organ of Corti of the inner ear.

The protein resides in the nucleus. It is found in the cytoplasm. Functionally, transcriptional repressor which binds neuron-restrictive silencer element (NRSE) and represses neuronal gene transcription in non-neuronal cells. Restricts the expression of neuronal genes by associating with two distinct corepressors, SIN3A and RCOR1, which in turn recruit histone deacetylase to the promoters of REST-regulated genes. Mediates repression by recruiting the BHC complex at RE1/NRSE sites which acts by deacetylating and demethylating specific sites on histones, thereby acting as a chromatin modifier. Transcriptional repression by REST-CDYL via the recruitment of histone methyltransferase EHMT2 may be important in transformation suppression. Represses the expression of SRRM4 in non-neural cells to prevent the activation of neural-specific splicing events and to prevent production of REST isoform 2. Repressor activity may be inhibited by forming heterodimers with isoform 2, thereby preventing binding to NRSE or binding to corepressors and leading to derepression of target genes. Also maintains repression of neuronal genes in neural stem cells, and allows transcription and differentiation into neurons by dissociation from RE1/NRSE sites of target genes. Thereby is involved in maintaining the quiescent state of adult neural stem cells and preventing premature differentiation into mature neurons. Plays a role in the developmental switch in synaptic NMDA receptor composition during postnatal development, by repressing GRIN2B expression and thereby altering NMDA receptor properties from containing primarily GRIN2B to primarily GRIN2A subunits. Acts as a regulator of osteoblast differentiation. Key repressor of gene expression in hypoxia; represses genes in hypoxia by direct binding to an RE1/NRSE site on their promoter regions. May also function in stress resistance in the brain during aging; possibly by regulating expression of genes involved in cell death and in the stress response. Repressor of gene expression in the hippocampus after ischemia by directly binding to RE1/NRSE sites and recruiting SIN3A and RCOR1 to promoters of target genes, thereby promoting changes in chromatin modifications and ischemia-induced cell death. After ischemia, might play a role in repression of miR-132 expression in hippocampal neurons, thereby leading to neuronal cell death. Binds to the 3' region of the neuron-restrictive silencer element (NRSE), with lower affinity than isoform 1. Exhibits weaker repressor activity compared to isoform 1. May negatively regulate the repressor activity of isoform 1 by binding to isoform 1, thereby preventing its binding to NRSE and leading to derepression of target genes. However, in another study, does not appear to be implicated in repressor activity of a NRSE motif-containing reporter construct nor in inhibitory activity on the isoform 1 transcriptional repressor activity. Post-transcriptional inactivation of REST by SRRM4-dependent alternative splicing into isoform 2 is required in mechanosensory hair cells in the inner ear for derepression of neuronal genes, maintenance of hair cells and hearing. The chain is RE1-silencing transcription factor (Rest) from Mus musculus (Mouse).